Reading from the N-terminus, the 163-residue chain is Nucleotide-binding protein BA_1166 (163 aa).

Belongs to the YajQ family.

Its function is as follows. Nucleotide-binding protein. This Bacillus anthracis protein is Nucleotide-binding protein BA_1166.